Consider the following 504-residue polypeptide: Cytochrome P450 2D9 (504 aa).

A Phosphoserine modification is found at Ser249. Position 446 (Cys446) interacts with heme.

This sequence belongs to the cytochrome P450 family. Heme is required as a cofactor.

The protein localises to the endoplasmic reticulum membrane. The protein resides in the microsome membrane. The enzyme catalyses an organic molecule + reduced [NADPH--hemoprotein reductase] + O2 = an alcohol + oxidized [NADPH--hemoprotein reductase] + H2O + H(+). Cytochromes P450 are a group of heme-thiolate monooxygenases. In liver microsomes, this enzyme is involved in an NADPH-dependent electron transport pathway. It oxidizes a variety of structurally unrelated compounds, including steroids, fatty acids, and xenobiotics. The polypeptide is Cytochrome P450 2D9 (Cyp2d9) (Mus musculus (Mouse)).